Reading from the N-terminus, the 251-residue chain is 2,3-bisphosphoglycerate-dependent phosphoglycerate mutase (251 aa).

Substrate is bound by residues 11 to 18, 24 to 25, R63, 90 to 93, K101, 117 to 118, and 184 to 185; these read RHGESDWN, TG, ERHY, RR, and GN. Residue H12 is the Tele-phosphohistidine intermediate of the active site. E90 acts as the Proton donor/acceptor in catalysis.

The protein belongs to the phosphoglycerate mutase family. BPG-dependent PGAM subfamily.

It carries out the reaction (2R)-2-phosphoglycerate = (2R)-3-phosphoglycerate. Its pathway is carbohydrate degradation; glycolysis; pyruvate from D-glyceraldehyde 3-phosphate: step 3/5. In terms of biological role, catalyzes the interconversion of 2-phosphoglycerate and 3-phosphoglycerate. This Mycobacterium ulcerans (strain Agy99) protein is 2,3-bisphosphoglycerate-dependent phosphoglycerate mutase.